Here is a 1081-residue protein sequence, read N- to C-terminus: DNA primase (1081 aa).

Positions Ser484 to Leu497 are enriched in polar residues. Residues Ser484 to Gly508 form a disordered region. The CHC2-type zinc finger occupies Cys1024–Cys1064.

Belongs to the herpesviridae DNA primase family. Associates with the helicase and the primase-associated factor to form the helicase-primase factor.

Its subcellular location is the host nucleus. Its function is as follows. Essential component of the helicase/primase complex. Unwinds the DNA at the replication forks and generates single-stranded DNA for both leading and lagging strand synthesis. The primase initiates primer synthesis and thereby produces large amount of short RNA primers on the lagging strand that the polymerase elongates using dNTPs. The sequence is that of DNA primase from Equus caballus (Horse).